Reading from the N-terminus, the 212-residue chain is Leucyl/phenylalanyl-tRNA--protein transferase (212 aa).

The protein belongs to the L/F-transferase family.

It localises to the cytoplasm. The enzyme catalyses N-terminal L-lysyl-[protein] + L-leucyl-tRNA(Leu) = N-terminal L-leucyl-L-lysyl-[protein] + tRNA(Leu) + H(+). It carries out the reaction N-terminal L-arginyl-[protein] + L-leucyl-tRNA(Leu) = N-terminal L-leucyl-L-arginyl-[protein] + tRNA(Leu) + H(+). It catalyses the reaction L-phenylalanyl-tRNA(Phe) + an N-terminal L-alpha-aminoacyl-[protein] = an N-terminal L-phenylalanyl-L-alpha-aminoacyl-[protein] + tRNA(Phe). In terms of biological role, functions in the N-end rule pathway of protein degradation where it conjugates Leu, Phe and, less efficiently, Met from aminoacyl-tRNAs to the N-termini of proteins containing an N-terminal arginine or lysine. This Flavobacterium johnsoniae (strain ATCC 17061 / DSM 2064 / JCM 8514 / BCRC 14874 / CCUG 350202 / NBRC 14942 / NCIMB 11054 / UW101) (Cytophaga johnsonae) protein is Leucyl/phenylalanyl-tRNA--protein transferase.